The sequence spans 859 residues: DNA (cytosine-5)-methyltransferase 3B (859 aa).

The tract at residues 1-305 (MKGDSRHLNE…LATFNKLVSY (305 aa)) is interaction with DNMT1 and DNMT3A. A disordered region spans residues 25–226 (GNFSDQSSDT…RDGDSTEYQD (202 aa)). Residues 85–94 (DRDDEVDDGN) are compositionally biased toward acidic residues. Serine 96 is subject to Phosphoserine. A Glycyl lysine isopeptide (Lys-Gly) (interchain with G-Cter in SUMO2) cross-link involves residue lysine 102. The segment covering 103 to 114 (LTRETKDTRTRS) has biased composition (basic and acidic residues). Threonine 112 bears the Phosphothreonine mark. Phosphoserine is present on serine 116. Positions 167 to 179 (SSSASTPWSSPAS) are enriched in low complexity. The span at 189 to 198 (KSVSTPSVDL) shows a compositional bias: polar residues. The segment covering 214–226 (AESRDGDSTEYQD) has biased composition (basic and acidic residues). Serine 216 carries the phosphoserine modification. The region spanning 232–290 (IGDLVWGKIKGFSWWPAMVVSWKATSKRQAMPGMRWVQWFGDGKFSEISADKLVALGLF) is the PWWP domain. Residues 348 to 429 (KPTGIEGLKP…ESRERMASEV (82 aa)) form a disordered region. 2 stretches are compositionally biased toward basic and acidic residues: residues 370-381 (RRSDSRNLEPRR) and 412-426 (GKDR…ERMA). Arginine 415 is subject to Citrulline. Positions 428 to 560 (EVTNNKGNLE…LQDFFTTDPD (133 aa)) constitute an ADD domain. The segment at 439-469 (RCLSCGKKNPVSFHPLFEGGLCQSCRDRFLE) adopts a GATA-type; atypical zinc-finger fold. An interaction with the PRC2/EED-EZH2 complex region spans residues 440–532 (CLSCGKKNPV…LQEPWSCYMC (93 aa)). The PHD-type; atypical zinc-finger motif lies at 480–536 (QSYCTVCCEGRELLLCSNTSCCRCFCVECLEVLVGAGTAEDAKLQEPWSCYMCLPQR). Residues 581 to 859 (IRVLSLFDGI…APLKDYFACE (279 aa)) form the SAM-dependent MTase C5-type domain. Residues 588–592 (DGIAT) and glutamate 611 contribute to the S-adenosyl-L-methionine site. Lysine 623 is covalently cross-linked (Glycyl lysine isopeptide (Lys-Gly) (interchain with G-Cter in SUMO2)). 633-635 (DVR) lines the S-adenosyl-L-methionine pocket. Cysteine 657 is an active-site residue. 838-840 (RSW) is a binding site for S-adenosyl-L-methionine.

This sequence belongs to the class I-like SAM-binding methyltransferase superfamily. C5-methyltransferase family. Interacts with CBX4, DNMT1, DNMT3A, SETDB1, UBE2I9, UBL1 and ZHX1. Interacts with SUV39H1 and BAZ2A/TIP5. Interacts with the PRC2/EED-EZH2 complex. Interacts with UHRF1. Sumoylated. Post-translationally, citrullinated by PADI4.

The protein resides in the nucleus. It catalyses the reaction a 2'-deoxycytidine in DNA + S-adenosyl-L-methionine = a 5-methyl-2'-deoxycytidine in DNA + S-adenosyl-L-homocysteine + H(+). Activated by binding to the regulatory factor DNMT3L. Functionally, required for genome-wide de novo methylation and is essential for the establishment of DNA methylation patterns during development. DNA methylation is coordinated with methylation of histones. May preferentially methylates nucleosomal DNA within the nucleosome core region. May function as transcriptional co-repressor by associating with CBX4 and independently of DNA methylation. Seems to be involved in gene silencing. In association with DNMT1 and via the recruitment of CTCFL/BORIS, involved in activation of BAG1 gene expression by modulating dimethylation of promoter histone H3 at H3K4 and H3K9. Functions as a transcriptional corepressor by associating with ZHX1. Required for DUX4 silencing in somatic cells. The sequence is that of DNA (cytosine-5)-methyltransferase 3B (Dnmt3b) from Mus musculus (Mouse).